Consider the following 328-residue polypeptide: GMP reductase (328 aa).

The active-site Thioimidate intermediate is Cys-176. 205 to 228 (IIADGGIRTHGDIAKSIRFGASMI) serves as a coordination point for NADP(+).

Belongs to the IMPDH/GMPR family. GuaC type 2 subfamily.

It catalyses the reaction IMP + NH4(+) + NADP(+) = GMP + NADPH + 2 H(+). In terms of biological role, catalyzes the irreversible NADPH-dependent deamination of GMP to IMP. It functions in the conversion of nucleobase, nucleoside and nucleotide derivatives of G to A nucleotides, and in maintaining the intracellular balance of A and G nucleotides. In Streptococcus pneumoniae (strain Taiwan19F-14), this protein is GMP reductase.